A 498-amino-acid chain; its full sequence is Diacylglycerol O-acyltransferase 1A (498 aa).

Residues 1–67 are disordered; sequence MAISDEPETV…ANSQPQQKQD (67 aa). 7 consecutive transmembrane segments (helical) span residues 102–122, 146–166, 178–198, 203–223, 253–273, 295–315, and 342–362; these read HAGL…RLII, WPLF…FIVE, VVVV…VLVI, SAFL…LKLV, YPYN…TLCY, LIIF…PIVQ, and VWLC…AELL. The FYXDWWN motif motif lies at 369–375; sequence FYQDWWN. A run of 3 helical transmembrane segments spans residues 410–430, 432–452, and 465–485; these read AVAL…CIAV, CHIF…LVFI, and VGNM…CVLL. The active site involves His424.

It belongs to the membrane-bound acyltransferase family. Sterol o-acyltransferase subfamily. As to expression, highly expressed in flowers and pods. Expressed at low levels in roots, stems and leaves.

The protein localises to the endoplasmic reticulum membrane. It catalyses the reaction an acyl-CoA + a 1,2-diacyl-sn-glycerol = a triacyl-sn-glycerol + CoA. It functions in the pathway glycerolipid metabolism; triacylglycerol biosynthesis. In terms of biological role, major contributor to triacylglycerol (TAG) synthesis and oil accumulation in developing seeds. Catalyzes the acylation of the sn-3 hydroxy group of sn-1,2-diacylglycerol using acyl-CoA. Has a marked preference for oleoyl-CoA (18:1) and sn-1,2-dioleoylglycerol over vernoloyl-CoA and sn-1,2-divernoloylglycerol. Can use oleoyl-CoA, linoleoyl-CoA and linolenoyl-CoA as substrates. The protein is Diacylglycerol O-acyltransferase 1A of Glycine max (Soybean).